We begin with the raw amino-acid sequence, 309 residues long: Malonyl CoA-acyl carrier protein transacylase (309 aa).

Residues serine 92 and histidine 201 contribute to the active site.

Belongs to the FabD family.

The catalysed reaction is holo-[ACP] + malonyl-CoA = malonyl-[ACP] + CoA. It participates in lipid metabolism; fatty acid biosynthesis. The sequence is that of Malonyl CoA-acyl carrier protein transacylase (fabD) from Escherichia coli O157:H7.